The following is a 697-amino-acid chain: U-box domain-containing protein 18 (697 aa).

The tract at residues 23 to 210 (SISIVTLLDS…INRILDHVGI (188 aa)) is U-box N-terminal domain (UND) required for EXO70B1 binding and crucial for the negative regulation of ABA-dependent stomatal movement. The U-box domain occupies 287 to 361 (LKVEDLLCPI…RKHCKTNGIV (75 aa)). 6 ARM repeats span residues 420–459 (SFNR…NLSK), 461–500 (VTGK…YLSS), 502–544 (EDYS…GLLM), 546–587 (SDNH…KLAE), 589–631 (PDGT…NLCL), and 657–696 (NGEY…FVHA).

In terms of assembly, interacts with EXO70B1 via its U-box N-terminal domain (UND).

It localises to the endomembrane system. The catalysed reaction is S-ubiquitinyl-[E2 ubiquitin-conjugating enzyme]-L-cysteine + [acceptor protein]-L-lysine = [E2 ubiquitin-conjugating enzyme]-L-cysteine + N(6)-ubiquitinyl-[acceptor protein]-L-lysine.. The protein operates within protein modification; protein ubiquitination. Functionally, functions as an E3 ubiquitin ligase. Mediates EXO70B1 ubiquitination. Involved in the regulation of abscisic acid (ABA)-mediated stomatal movements. This chain is U-box domain-containing protein 18, found in Arabidopsis thaliana (Mouse-ear cress).